Reading from the N-terminus, the 991-residue chain is KAT8 regulatory NSL complex subunit 1-like protein (991 aa).

Lys136 is covalently cross-linked (Glycyl lysine isopeptide (Lys-Gly) (interchain with G-Cter in SUMO2)). Residues 443–462 (VNSQVPQRSEEPLPEHDFEM) form a disordered region. Over residues 450-461 (RSEEPLPEHDFE) the composition is skewed to basic and acidic residues. Ser463 is subject to Phosphoserine. Residues 749–763 (ANVTSRTQNPSSQNT) show a composition bias toward polar residues. Residues 749–770 (ANVTSRTQNPSSQNTSRRRLRS) are disordered. A PEHE domain is found at 798-919 (EILTPRWRKV…DGQEDKSLRW (122 aa)). N6-acetyllysine is present on Lys863.

Acetylated on lysine residues by KAT8 upon ionizing radiation-induced DNA damage; deacetylated by HDAC3.

This Mus musculus (Mouse) protein is KAT8 regulatory NSL complex subunit 1-like protein (Kansl1l).